The sequence spans 299 residues: Coenzyme PQQ synthesis protein B (299 aa).

This sequence belongs to the PqqB family.

The protein operates within cofactor biosynthesis; pyrroloquinoline quinone biosynthesis. May be involved in the transport of PQQ or its precursor to the periplasm. The sequence is that of Coenzyme PQQ synthesis protein B from Methylorubrum extorquens (strain ATCC 14718 / DSM 1338 / JCM 2805 / NCIMB 9133 / AM1) (Methylobacterium extorquens).